Reading from the N-terminus, the 146-residue chain is MIVICDHDNLDAWLALRTALWPSGSPEDHRAEMREILASPHHTAFMARGLDGAFVAFAEVALRYDYVNGCESSPVAFLEGIYTAERARRQGWAARLIAQVQEWAKQQGCSELASDTDIANLDSQRLHAALGFAETERVVFYRKTLG.

Residues 1–146 (MIVICDHDNL…RVVFYRKTLG (146 aa)) form the N-acetyltransferase domain. Trp-21, Tyr-66, Glu-79, and Asp-115 together coordinate substrate. Asn-120 is an acetyl-CoA binding site. Glu-136 is a binding site for substrate.

In terms of assembly, homodimer.

The enzyme catalyses kanamycin B + acetyl-CoA = N(6')-acetylkanamycin B + CoA + H(+). Its function is as follows. Catalyzes the transfer of an acetyl group from acetyl-CoA to the 6'-amino group of aminoglycoside molecules conferring resistance to antibiotics containing the purpurosamine ring including amikacin, tobramycin, netilmicin, isepamicin and sisomicin. The protein is Aminoglycoside N(6')-acetyltransferase type 1 of Serratia marcescens.